The sequence spans 589 residues: uncharacterized protein (589 aa).

Helical transmembrane passes span 90–110, 128–148, 162–182, 189–209, 217–237, 245–265, 284–304, 311–331, 355–375, 390–410, 419–439, 448–468, 483–503, and 545–565; these read YIVI…QTVI, SWIG…CGIM, IVLF…LWLV, GIGG…ITPL, GCMG…GGAI, WIFF…IFFL, FVGI…LNIG, AHAN…GFVV, VMVT…YIPV, VHTL…GMGI, PMIG…AIYY, GFLA…LIAV, AFML…AVIY, and IRMI…LSFF.

The protein belongs to the major facilitator superfamily. TCR/Tet family.

Its subcellular location is the membrane. This is an uncharacterized protein from Schizosaccharomyces pombe (strain 972 / ATCC 24843) (Fission yeast).